Here is a 401-residue protein sequence, read N- to C-terminus: Probable 2,3-bisphosphoglycerate-independent phosphoglycerate mutase (401 aa).

The protein belongs to the BPG-independent phosphoglycerate mutase family. A-PGAM subfamily.

It carries out the reaction (2R)-2-phosphoglycerate = (2R)-3-phosphoglycerate. It participates in carbohydrate degradation; glycolysis; pyruvate from D-glyceraldehyde 3-phosphate: step 3/5. Functionally, catalyzes the interconversion of 2-phosphoglycerate and 3-phosphoglycerate. The protein is Probable 2,3-bisphosphoglycerate-independent phosphoglycerate mutase of Thermotoga petrophila (strain ATCC BAA-488 / DSM 13995 / JCM 10881 / RKU-1).